Reading from the N-terminus, the 222-residue chain is MTDYSAFEVMGPIMVGPSSSHTAGACKIANVATSIVSNNYNQVEFQLHGSFAHTFKGHGTDRALVGGILGFEPDDDRIKTSFELAKQAGLNYIFTTTNLGDNYHPNSVKIVFSYPNGEEEYVIGSSIGGGAMKIVNINGIAIEFRGEYSTILLEYPEQRGVISYVSSLLTGSEYNIESLNTKKNKLTNIVTLTVEIDKPLTESLKSAILGVERFTTAKYVEV.

An ACT domain is found at 150–222; sequence TILLEYPEQR…RFTTAKYVEV (73 aa).

It belongs to the iron-sulfur dependent L-serine dehydratase family. As to quaternary structure, heterooctamer of four alpha chains and four beta chains. [4Fe-4S] cluster is required as a cofactor.

It catalyses the reaction L-serine = pyruvate + NH4(+). It functions in the pathway carbohydrate biosynthesis; gluconeogenesis. This chain is L-serine dehydratase, beta chain (sdhB), found in Peptoniphilus asaccharolyticus (Peptostreptococcus asaccharolyticus).